An 862-amino-acid chain; its full sequence is DNA topoisomerase 3-beta-1 (862 aa).

The 151-residue stretch at 3 to 153 folds into the Toprim domain; it reads TVLMVAEKPS…EKTVFRARFS (151 aa). Residues 171–593 form the Topo IA-type catalytic domain; it reads DHNEALSVDA…HTLDIFKRKF (423 aa). Tyr336 serves as the catalytic O-(5'-phospho-DNA)-tyrosine intermediate. Residues 820 to 855 form a disordered region; sequence HPMHRGGPGRRQGRGRGRGRRPPGKPNPRRPKDKMS. Residues 821 to 851 show a composition bias toward basic residues; the sequence is PMHRGGPGRRQGRGRGRGRRPPGKPNPRRPK.

It belongs to the type IA topoisomerase family. In terms of tissue distribution, highly expressed in testis.

The catalysed reaction is ATP-independent breakage of single-stranded DNA, followed by passage and rejoining.. Its function is as follows. Releases the supercoiling and torsional tension of DNA introduced during the DNA replication and transcription by transiently cleaving and rejoining one strand of the DNA duplex. Introduces a single-strand break via transesterification at a target site in duplex DNA. The scissile phosphodiester is attacked by the catalytic tyrosine of the enzyme, resulting in the formation of a DNA-(5'-phosphotyrosyl)-enzyme intermediate and the expulsion of a 3'-OH DNA strand. The free DNA strand than undergoes passage around the unbroken strand thus removing DNA supercoils. Finally, in the religation step, the DNA 3'-OH attacks the covalent intermediate to expel the active-site tyrosine and restore the DNA phosphodiester backbone. Possesses negatively supercoiled DNA relaxing activity. In Mus musculus (Mouse), this protein is DNA topoisomerase 3-beta-1 (Top3b).